The following is a 429-amino-acid chain: Hydrogenobyrinate a,c-diamide synthase (429 aa).

The 190-residue stretch at 240–429 folds into the GATase cobBQ-type domain; sequence RTAVARDVAF…SFMHLIDFSE (190 aa). The active-site Nucleophile is the cysteine 323.

This sequence belongs to the CobB/CbiA family. The cofactor is Mg(2+).

The enzyme catalyses hydrogenobyrinate + 2 L-glutamine + 2 ATP + 2 H2O = hydrogenobyrinate a,c-diamide + 2 L-glutamate + 2 ADP + 2 phosphate + 2 H(+). The protein operates within cofactor biosynthesis; adenosylcobalamin biosynthesis; cob(II)yrinate a,c-diamide from precorrin-2 (aerobic route): step 9/10. Functionally, catalyzes the ATP-dependent amidation of the two carboxylate groups at positions a and c of hydrogenobyrinate, using either L-glutamine or ammonia as the nitrogen source. This chain is Hydrogenobyrinate a,c-diamide synthase, found in Rhizobium meliloti (strain 1021) (Ensifer meliloti).